We begin with the raw amino-acid sequence, 283 residues long: 4-diphosphocytidyl-2-C-methyl-D-erythritol kinase (283 aa).

Lys-10 is an active-site residue. An ATP-binding site is contributed by 99-109; sequence PMGGGLGGGSS. The active site involves Asp-141.

This sequence belongs to the GHMP kinase family. IspE subfamily. As to quaternary structure, homodimer.

The enzyme catalyses 4-CDP-2-C-methyl-D-erythritol + ATP = 4-CDP-2-C-methyl-D-erythritol 2-phosphate + ADP + H(+). It participates in isoprenoid biosynthesis; isopentenyl diphosphate biosynthesis via DXP pathway; isopentenyl diphosphate from 1-deoxy-D-xylulose 5-phosphate: step 3/6. Catalyzes the phosphorylation of the position 2 hydroxy group of 4-diphosphocytidyl-2C-methyl-D-erythritol. This Escherichia coli O7:K1 (strain IAI39 / ExPEC) protein is 4-diphosphocytidyl-2-C-methyl-D-erythritol kinase.